A 568-amino-acid polypeptide reads, in one-letter code: Probable inactive 1-aminocyclopropane-1-carboxylate synthase-like protein 2 (568 aa).

Residues 1 to 21 are disordered; the sequence is MSHRSDTLPVPSGQRRGRVPR. K395 carries the N6-(pyridoxal phosphate)lysine modification.

The protein belongs to the class-I pyridoxal-phosphate-dependent aminotransferase family.

The polypeptide is Probable inactive 1-aminocyclopropane-1-carboxylate synthase-like protein 2 (ACCSL) (Homo sapiens (Human)).